The following is a 462-amino-acid chain: 3-isopropylmalate dehydratase large subunit (462 aa).

[4Fe-4S] cluster is bound by residues Cys-337, Cys-397, and Cys-400.

Belongs to the aconitase/IPM isomerase family. LeuC type 1 subfamily. As to quaternary structure, heterodimer of LeuC and LeuD. It depends on [4Fe-4S] cluster as a cofactor.

The catalysed reaction is (2R,3S)-3-isopropylmalate = (2S)-2-isopropylmalate. Its pathway is amino-acid biosynthesis; L-leucine biosynthesis; L-leucine from 3-methyl-2-oxobutanoate: step 2/4. In terms of biological role, catalyzes the isomerization between 2-isopropylmalate and 3-isopropylmalate, via the formation of 2-isopropylmaleate. The polypeptide is 3-isopropylmalate dehydratase large subunit (Listeria monocytogenes serotype 4b (strain CLIP80459)).